The sequence spans 204 residues: ATP-dependent Clp protease proteolytic subunit (204 aa).

Ser101 serves as the catalytic Nucleophile. The active site involves His126.

This sequence belongs to the peptidase S14 family. As to quaternary structure, component of the chloroplastic Clp protease core complex.

It is found in the plastid. It localises to the chloroplast stroma. It carries out the reaction Hydrolysis of proteins to small peptides in the presence of ATP and magnesium. alpha-casein is the usual test substrate. In the absence of ATP, only oligopeptides shorter than five residues are hydrolyzed (such as succinyl-Leu-Tyr-|-NHMec, and Leu-Tyr-Leu-|-Tyr-Trp, in which cleavage of the -Tyr-|-Leu- and -Tyr-|-Trp bonds also occurs).. Cleaves peptides in various proteins in a process that requires ATP hydrolysis. Has a chymotrypsin-like activity. Plays a major role in the degradation of misfolded proteins. This is ATP-dependent Clp protease proteolytic subunit from Anthoceros angustus (Hornwort).